A 195-amino-acid chain; its full sequence is CDP-diacylglycerol--glycerol-3-phosphate 3-phosphatidyltransferase (195 aa).

A run of 4 helical transmembrane segments spans residues 7-24, 60-81, 134-150, and 157-173; these read ITVL…LFYL, FGAF…VLLV, MLAL…FTFW, and FLLI…LQYL.

This sequence belongs to the CDP-alcohol phosphatidyltransferase class-I family.

Its subcellular location is the cell membrane. The catalysed reaction is a CDP-1,2-diacyl-sn-glycerol + sn-glycerol 3-phosphate = a 1,2-diacyl-sn-glycero-3-phospho-(1'-sn-glycero-3'-phosphate) + CMP + H(+). Its pathway is phospholipid metabolism; phosphatidylglycerol biosynthesis; phosphatidylglycerol from CDP-diacylglycerol: step 1/2. Functionally, this protein catalyzes the committed step to the synthesis of the acidic phospholipids. The protein is CDP-diacylglycerol--glycerol-3-phosphate 3-phosphatidyltransferase (pgsA) of Pseudomonas fluorescens.